The following is a 166-amino-acid chain: MAKTLSKPASGALAPWLGISLIVILFDQLSKIAILKTFAYGAQHALTSFFSLVLVYNRGAAFGFLSTASGWQRWAFTALGIGATLVICFLLRRHGQQRLFSLSLALILGGALGNVIDRLVYGHVIDFLDFHVGGWHFPAFNLADSAITIGAVLLVYDELRRVRGSR.

The next 4 helical transmembrane spans lie at 9–29 (ASGA…FDQL), 45–65 (ALTS…FGFL), 71–91 (WQRW…CFLL), and 100–120 (FSLS…DRLV). Active-site residues include aspartate 126 and aspartate 144. Residues 135–155 (WHFPAFNLADSAITIGAVLLV) traverse the membrane as a helical segment.

The protein belongs to the peptidase A8 family.

Its subcellular location is the cell inner membrane. The catalysed reaction is Release of signal peptides from bacterial membrane prolipoproteins. Hydrolyzes -Xaa-Yaa-Zaa-|-(S,diacylglyceryl)Cys-, in which Xaa is hydrophobic (preferably Leu), and Yaa (Ala or Ser) and Zaa (Gly or Ala) have small, neutral side chains.. It participates in protein modification; lipoprotein biosynthesis (signal peptide cleavage). In terms of biological role, this protein specifically catalyzes the removal of signal peptides from prolipoproteins. This chain is Lipoprotein signal peptidase, found in Burkholderia ambifaria (strain ATCC BAA-244 / DSM 16087 / CCUG 44356 / LMG 19182 / AMMD) (Burkholderia cepacia (strain AMMD)).